The following is a 213-amino-acid chain: Pyrrolidone-carboxylate peptidase (213 aa).

Residues Glu-78, Cys-141, and His-165 contribute to the active site.

It belongs to the peptidase C15 family. As to quaternary structure, homotetramer.

Its subcellular location is the cytoplasm. The enzyme catalyses Release of an N-terminal pyroglutamyl group from a polypeptide, the second amino acid generally not being Pro.. Functionally, removes 5-oxoproline from various penultimate amino acid residues except L-proline. The polypeptide is Pyrrolidone-carboxylate peptidase (Clostridium botulinum (strain Alaska E43 / Type E3)).